The primary structure comprises 185 residues: Ribosome-recycling factor (185 aa).

The protein belongs to the RRF family.

It localises to the cytoplasm. In terms of biological role, responsible for the release of ribosomes from messenger RNA at the termination of protein biosynthesis. May increase the efficiency of translation by recycling ribosomes from one round of translation to another. In Baumannia cicadellinicola subsp. Homalodisca coagulata, this protein is Ribosome-recycling factor.